Reading from the N-terminus, the 529-residue chain is UDP-glucuronosyltransferase 2B33 (529 aa).

Positions methionine 1–glycine 24 are cleaved as a signal peptide. Residues asparagine 67 and asparagine 68 are each glycosylated (N-linked (GlcNAc...) asparagine). A helical membrane pass occupies residues isoleucine 494–phenylalanine 514.

This sequence belongs to the UDP-glycosyltransferase family.

It is found in the microsome membrane. The protein localises to the endoplasmic reticulum membrane. It carries out the reaction glucuronate acceptor + UDP-alpha-D-glucuronate = acceptor beta-D-glucuronoside + UDP + H(+). Functionally, UDPGTs are of major importance in the conjugation and subsequent elimination of potentially toxic xenobiotics and endogenous compounds. This isozyme has glucuronidating capacity on estriol and does not catalyze the glucuronidation of beta-estradiol. Capable of conjugating 4-hydroxyestrone, androsterone, diclofenac, and hyodeoxycholic acid. This Macaca mulatta (Rhesus macaque) protein is UDP-glucuronosyltransferase 2B33 (UGT2B33).